We begin with the raw amino-acid sequence, 205 residues long: DNA-directed RNA polymerase subunit 5 (205 aa).

Belongs to the archaeal Rpo5/eukaryotic RPB5 RNA polymerase subunit family.

It is found in the virion. The catalysed reaction is RNA(n) + a ribonucleoside 5'-triphosphate = RNA(n+1) + diphosphate. In terms of biological role, DNA-dependent RNA polymerase catalyzes the transcription of DNA into RNA using the four ribonucleoside triphosphates as substrates. The protein is DNA-directed RNA polymerase subunit 5 of Acanthamoeba polyphaga (Amoeba).